A 118-amino-acid polypeptide reads, in one-letter code: Large ribosomal subunit protein uL18 (118 aa).

The tract at residues 1 to 22 is disordered; the sequence is MISKPDKNKLRQKRHRRVRGKL. Positions 10–20 are enriched in basic residues; it reads LRQKRHRRVRG.

This sequence belongs to the universal ribosomal protein uL18 family. In terms of assembly, part of the 50S ribosomal subunit; part of the 5S rRNA/L5/L18/L25 subcomplex. Contacts the 5S and 23S rRNAs.

Functionally, this is one of the proteins that bind and probably mediate the attachment of the 5S RNA into the large ribosomal subunit, where it forms part of the central protuberance. This chain is Large ribosomal subunit protein uL18, found in Streptococcus thermophilus (strain ATCC BAA-491 / LMD-9).